The chain runs to 241 residues: 1-(5-phosphoribosyl)-5-[(5-phosphoribosylamino)methylideneamino] imidazole-4-carboxamide isomerase (241 aa).

Aspartate 10 serves as the catalytic Proton acceptor. Aspartate 131 functions as the Proton donor in the catalytic mechanism.

It belongs to the HisA/HisF family.

It localises to the cytoplasm. It catalyses the reaction 1-(5-phospho-beta-D-ribosyl)-5-[(5-phospho-beta-D-ribosylamino)methylideneamino]imidazole-4-carboxamide = 5-[(5-phospho-1-deoxy-D-ribulos-1-ylimino)methylamino]-1-(5-phospho-beta-D-ribosyl)imidazole-4-carboxamide. Its pathway is amino-acid biosynthesis; L-histidine biosynthesis; L-histidine from 5-phospho-alpha-D-ribose 1-diphosphate: step 4/9. The protein is 1-(5-phosphoribosyl)-5-[(5-phosphoribosylamino)methylideneamino] imidazole-4-carboxamide isomerase of Bifidobacterium longum (strain DJO10A).